A 1293-amino-acid polypeptide reads, in one-letter code: Phosphoribosylformylglycinamidine synthase (1293 aa).

ATP is bound by residues 305–316 (GAATGSGGEIRD) and Ala-676. The tract at residues 305-327 (GAATGSGGEIRDEGATGRGSKPK) is disordered. Mg(2+) is bound by residues Asp-677, Glu-716, Asn-720, and Asp-884. Ser-886 serves as a coordination point for ATP. Residues 1040–1293 (MAILREQGVN…MFRNARVNLG (254 aa)) enclose the Glutamine amidotransferase type-1 domain. The active-site Nucleophile is the Cys-1133. Catalysis depends on residues His-1258 and Glu-1260.

This sequence in the N-terminal section; belongs to the FGAMS family. In terms of assembly, monomer.

The protein localises to the cytoplasm. The catalysed reaction is N(2)-formyl-N(1)-(5-phospho-beta-D-ribosyl)glycinamide + L-glutamine + ATP + H2O = 2-formamido-N(1)-(5-O-phospho-beta-D-ribosyl)acetamidine + L-glutamate + ADP + phosphate + H(+). It participates in purine metabolism; IMP biosynthesis via de novo pathway; 5-amino-1-(5-phospho-D-ribosyl)imidazole from N(2)-formyl-N(1)-(5-phospho-D-ribosyl)glycinamide: step 1/2. Its function is as follows. Phosphoribosylformylglycinamidine synthase involved in the purines biosynthetic pathway. Catalyzes the ATP-dependent conversion of formylglycinamide ribonucleotide (FGAR) and glutamine to yield formylglycinamidine ribonucleotide (FGAM) and glutamate. The polypeptide is Phosphoribosylformylglycinamidine synthase (Shewanella sp. (strain MR-4)).